The sequence spans 876 residues: MSHHKKRVYPQAQVPYIASMPIVAEQQQSQQQIDQTAYAMGNLQLNNRANSFTQLAQNQQFPGSGKVVNQLYPVDLFTELPPPIRDLSLPPLPITISQDNIVTPSEYSNVPYQYVRSTLKAVPKTNSLLKKTKLPFAIVIRPYLHLQDSDNQVPLNTDGVIVRCRRCRSYMNPFVVFINQGRKWQCNICRFKNDVPFGFDQNLQGAPINRYERNEIKNSVVDYLAPVEYSVREPPPSVYVFLLDVSQNAVKNGLLATSARTILENIEFLPNHDGRTRIAIICVDHSLHYFYVPLDDDYEVSDEDDEESDGEEEDEDEEEEDVDNSETIQMFDIGDLDEPFLPMPSDELVVPLKYCKNNLETLLKKIPEIFQDTHSSKFALGPALKAASNLIKSTGGKVEVISSTLPNTGIGKLKKRSEQGILNTPKESSQLLSCKDSFYKTFTIECNKLQITVDMFLASEDYMDVATLSHLGRFSGGQTHFYPGFNATSLNDVTKFTRELSRHLSMDISMEAVMRVRCSTGLRATSFFGHFFNRSSDLCAFSTMPRDQSYLFGISIEDSLMAEYCYLQVSTLLTLNTGERRIRVMTLALPTSESAREVFASADQLAITDFMTQNAVTKALNSSMYSARDFITKSLEDILNAYKKEISMSNINSVTSLNLCANLRMLPLLMNGLSKHIALRPGVVPSDYRASALNRLETEPLHYLIKSIYPTVYSLHDMPDEVGLPDFEGKTVLPEPINATISLFERYGLYLIDNSAELFLWVGGDAVPELLIDVFNTDTISQIPVGKSELPLLNDSPFNERLRRIIGRIRENNDTITFQSLYIIRGPSINEPANLNSEKDMASLRLWVLSTLVEDKVLNCASYREYLQSMKTSINR.

Serine 51 carries the phosphoserine modification. Residues 164 to 189 form a zinc finger-like region; sequence CRRCRSYMNPFVVFINQGRKWQCNIC. Residues 300–324 are compositionally biased toward acidic residues; sequence VSDEDDEESDGEEEDEDEEEEDVDN. Residues 300-326 form a disordered region; it reads VSDEDDEESDGEEEDEDEEEEDVDNSE.

This sequence belongs to the SEC23/SEC24 family. SEC24 subfamily. As to quaternary structure, COPII is composed of at least five proteins: the SEC23/24 complex, the SEC13/31 complex and SAR1. Interacts with GRH1.

The protein localises to the cytoplasm. Its subcellular location is the golgi apparatus membrane. It is found in the endoplasmic reticulum membrane. Its function is as follows. Component of the COPII coat, that covers ER-derived vesicles involved in transport from the endoplasmic reticulum to the Golgi apparatus. COPII acts in the cytoplasm to promote the transport of secretory, plasma membrane, and vacuolar proteins from the endoplasmic reticulum to the Golgi complex. This is SED5-binding protein 2 (SFB2) from Saccharomyces cerevisiae (strain ATCC 204508 / S288c) (Baker's yeast).